The chain runs to 467 residues: Transcriptional modulator WTM2 (467 aa).

Low complexity predominate over residues 1-12; the sequence is MAKSKSSQGASG. Disordered stretches follow at residues 1-22 and 84-121; these read MAKS…PSLY and TFYD…AFQD. Residues 87 to 100 show a composition bias toward acidic residues; it reads DDDDDDDNDDDDEE. 3 WD repeats span residues 244–282, 287–327, and 349–389; these read PGTN…KPLW, PKNG…LATT, and SGGD…SRND.

Transcriptional modulator with roles in meiotic regulation and silencing. This Saccharomyces cerevisiae (strain ATCC 204508 / S288c) (Baker's yeast) protein is Transcriptional modulator WTM2 (WTM2).